Reading from the N-terminus, the 450-residue chain is ATP-dependent protease ATPase subunit HslU (450 aa).

Residues Val29, 71–76 (GVGKTE), Asp261, Glu328, and Arg400 contribute to the ATP site.

Belongs to the ClpX chaperone family. HslU subfamily. In terms of assembly, a double ring-shaped homohexamer of HslV is capped on each side by a ring-shaped HslU homohexamer. The assembly of the HslU/HslV complex is dependent on binding of ATP.

It is found in the cytoplasm. ATPase subunit of a proteasome-like degradation complex; this subunit has chaperone activity. The binding of ATP and its subsequent hydrolysis by HslU are essential for unfolding of protein substrates subsequently hydrolyzed by HslV. HslU recognizes the N-terminal part of its protein substrates and unfolds these before they are guided to HslV for hydrolysis. This Rickettsia rickettsii (strain Iowa) protein is ATP-dependent protease ATPase subunit HslU.